Consider the following 336-residue polypeptide: Gastrula zinc finger protein XlCGF57.1 (336 aa).

C2H2-type zinc fingers lie at residues 6 to 28 (YTCT…MKIH), 34 to 56 (FICT…MKTH), 62 to 84 (FTCT…LTIH), 90 to 112 (FSCT…MKTH), 118 to 140 (FTCT…MKTH), 146 to 168 (FTCT…LKIH), 174 to 196 (FTCT…LKIH), 202 to 224 (FTCT…MKIH), 230 to 252 (FSCT…LTMH), 258 to 280 (FTCT…TKIH), and 286 to 308 (FSCT…LKIH).

The protein belongs to the krueppel C2H2-type zinc-finger protein family.

It is found in the nucleus. In terms of biological role, may be involved in transcriptional regulation. This is Gastrula zinc finger protein XlCGF57.1 from Xenopus laevis (African clawed frog).